A 197-amino-acid polypeptide reads, in one-letter code: MIEFIRGYVDYVCPEYVVIENNGVGYQIFTPNPFSFQMNKQQQIVVYTYQYVREDVLALYGFHTRQERMLFAKLLQVSGIGPKGALAILAAGQLEQLVEAIEAENDQFLCKFPGVGKKTARQMILDLKGKLQAIVPDAFPNLFTEPLEETNALSEAIEALKALGYADKEIQKVVPMLRQERLSTEGYIKLALQKLLK.

Residues M1 to H63 form a domain I region. The tract at residues T64 to L142 is domain II. Residues F143–E149 are flexible linker. The domain III stretch occupies residues E149–K197.

It belongs to the RuvA family. As to quaternary structure, homotetramer. Forms an RuvA(8)-RuvB(12)-Holliday junction (HJ) complex. HJ DNA is sandwiched between 2 RuvA tetramers; dsDNA enters through RuvA and exits via RuvB. An RuvB hexamer assembles on each DNA strand where it exits the tetramer. Each RuvB hexamer is contacted by two RuvA subunits (via domain III) on 2 adjacent RuvB subunits; this complex drives branch migration. In the full resolvosome a probable DNA-RuvA(4)-RuvB(12)-RuvC(2) complex forms which resolves the HJ.

The protein resides in the cytoplasm. The RuvA-RuvB-RuvC complex processes Holliday junction (HJ) DNA during genetic recombination and DNA repair, while the RuvA-RuvB complex plays an important role in the rescue of blocked DNA replication forks via replication fork reversal (RFR). RuvA specifically binds to HJ cruciform DNA, conferring on it an open structure. The RuvB hexamer acts as an ATP-dependent pump, pulling dsDNA into and through the RuvAB complex. HJ branch migration allows RuvC to scan DNA until it finds its consensus sequence, where it cleaves and resolves the cruciform DNA. This is Holliday junction branch migration complex subunit RuvA from Anoxybacillus flavithermus (strain DSM 21510 / WK1).